The sequence spans 156 residues: Arginine repressor (156 aa).

The protein belongs to the ArgR family.

The protein localises to the cytoplasm. The protein operates within amino-acid biosynthesis; L-arginine biosynthesis [regulation]. Its function is as follows. Regulates arginine biosynthesis genes. This Enterobacter sp. (strain 638) protein is Arginine repressor.